A 318-amino-acid chain; its full sequence is 4-diphosphocytidyl-2-C-methyl-D-erythritol kinase (318 aa).

The active site involves Lys-13. 101–111 (PVAGGMAGGSA) provides a ligand contact to ATP. Residue Asp-143 is part of the active site. The tract at residues 298–318 (PGARLVTDDRADRPTPPQVHA) is disordered.

Belongs to the GHMP kinase family. IspE subfamily.

It catalyses the reaction 4-CDP-2-C-methyl-D-erythritol + ATP = 4-CDP-2-C-methyl-D-erythritol 2-phosphate + ADP + H(+). Its pathway is isoprenoid biosynthesis; isopentenyl diphosphate biosynthesis via DXP pathway; isopentenyl diphosphate from 1-deoxy-D-xylulose 5-phosphate: step 3/6. Catalyzes the phosphorylation of the position 2 hydroxy group of 4-diphosphocytidyl-2C-methyl-D-erythritol. This Saccharopolyspora erythraea (strain ATCC 11635 / DSM 40517 / JCM 4748 / NBRC 13426 / NCIMB 8594 / NRRL 2338) protein is 4-diphosphocytidyl-2-C-methyl-D-erythritol kinase.